The sequence spans 270 residues: G-box-binding factor 4 (270 aa).

The interval 1 to 46 (MASFKLMSSSNSDLSRRNSSSASSSPSIRSSHHLRPNPHADHSRIS) is disordered. Low complexity predominate over residues 8-29 (SSSNSDLSRRNSSSASSSPSIR). S27 carries the phosphoserine modification. The region spanning 187-250 (AAQRQKRMIK…YKKLMEVLIP (64 aa)) is the bZIP domain. The tract at residues 190 to 208 (RQKRMIKNRESAARSRERK) is basic motif. The leucine-zipper stretch occupies residues 215–229 (LETLAAKLEEENEQL). The segment at 250-270 (PVDEKPRPPSRPLSRSHSLEW) is disordered. The segment covering 261 to 270 (PLSRSHSLEW) has biased composition (low complexity).

Belongs to the bZIP family. In terms of assembly, DNA-binding heterodimer with GBF2 and GBF3; non DNA-binding homodimer.

The protein resides in the nucleus. Functionally, binds to the G-box motif (5'-CCACGTGG-3') of the rbcS-1A gene promoter. G-box and G-box-like motifs are cis-acting elements defined in promoters of certain plant genes which are regulated by such diverse stimuli as light-induction or hormone control. This Arabidopsis thaliana (Mouse-ear cress) protein is G-box-binding factor 4 (GBF4).